The following is a 343-amino-acid chain: Anthranilate phosphoribosyltransferase (343 aa).

Residues glycine 81, 84-85 (GD), 91-94 (NVST), 109-117 (KHGNRSVSS), and serine 121 each bind 5-phospho-alpha-D-ribose 1-diphosphate. Glycine 81 provides a ligand contact to anthranilate. Residue serine 93 coordinates Mg(2+). Asparagine 112 is a binding site for anthranilate. Anthranilate is bound at residue arginine 167. Mg(2+) contacts are provided by aspartate 226 and glutamate 227.

This sequence belongs to the anthranilate phosphoribosyltransferase family. Homodimer. Mg(2+) serves as cofactor.

It carries out the reaction N-(5-phospho-beta-D-ribosyl)anthranilate + diphosphate = 5-phospho-alpha-D-ribose 1-diphosphate + anthranilate. The protein operates within amino-acid biosynthesis; L-tryptophan biosynthesis; L-tryptophan from chorismate: step 2/5. Functionally, catalyzes the transfer of the phosphoribosyl group of 5-phosphorylribose-1-pyrophosphate (PRPP) to anthranilate to yield N-(5'-phosphoribosyl)-anthranilate (PRA). The chain is Anthranilate phosphoribosyltransferase from Chromohalobacter salexigens (strain ATCC BAA-138 / DSM 3043 / CIP 106854 / NCIMB 13768 / 1H11).